Reading from the N-terminus, the 91-residue chain is MSGVEEKVSGTTKTPADFLKSIRGRPVVVKLNSGVDYRGTLTCLDGYMNIAMEQTEEYVNGQLKNKYGDAFIRGNNVLYISTVNMTVADGA.

In terms of domain architecture, Sm spans 14–86; sequence TPADFLKSIR…VLYISTVNMT (73 aa).

Belongs to the snRNP Sm proteins family. Component of the heptameric LSM1-LSM7 complex that forms a seven-membered ring structure with a donut shape. The LSM subunits are arranged in the order LSM1, LSM2, LSM3, LSM6, LSM5, LSM7 and LSM4. Component of the heptameric LSM2-LSM8 complex that forms a seven-membered ring structure with a donut shape. The LSM subunits are arranged in the order LSM8, LSM2, LSM3, LSM6, LSM5, LSM7 and LSM4. LSM6A subunit interacts only with its two neighboring subunits, LSM3A or LSM3B and LSM5. Expressed in roots, leaves, stems, flowers and siliques.

The protein resides in the cytoplasm. It localises to the nucleus. Component of LSM protein complexes, which are involved in RNA processing. Component of the cytoplasmic LSM1-LSM7 complex which is involved in mRNA degradation by promoting decapping and leading to accurate 5'-3' mRNA decay. The cytoplasmic LSM1-LSM7 complex regulates developmental gene expression by the decapping of specific development-related transcripts. Component of the nuclear LSM2-LSM8 complex which is involved splicing nuclear mRNAs. LSM2-LSM8 binds directly to the U6 small nuclear RNAs (snRNAs) and is essential for accurate splicing of selected development-related mRNAs through the stabilization of the spliceosomal U6 snRNA. Plays a critical role in the regulation of development-related gene expression. The polypeptide is Sm-like protein LSM6A (Arabidopsis thaliana (Mouse-ear cress)).